Here is a 351-residue protein sequence, read N- to C-terminus: Biotin synthase (351 aa).

The region spanning 44–262 is the Radical SAM core domain; it reads NRVQVSTLLS…LAVARILMPQ (219 aa). Cysteine 59, cysteine 63, and cysteine 66 together coordinate [4Fe-4S] cluster. Cysteine 103, cysteine 134, cysteine 194, and arginine 266 together coordinate [2Fe-2S] cluster.

The protein belongs to the radical SAM superfamily. Biotin synthase family. Homodimer. It depends on [4Fe-4S] cluster as a cofactor. The cofactor is [2Fe-2S] cluster.

It catalyses the reaction (4R,5S)-dethiobiotin + (sulfur carrier)-SH + 2 reduced [2Fe-2S]-[ferredoxin] + 2 S-adenosyl-L-methionine = (sulfur carrier)-H + biotin + 2 5'-deoxyadenosine + 2 L-methionine + 2 oxidized [2Fe-2S]-[ferredoxin]. Its pathway is cofactor biosynthesis; biotin biosynthesis; biotin from 7,8-diaminononanoate: step 2/2. Its function is as follows. Catalyzes the conversion of dethiobiotin (DTB) to biotin by the insertion of a sulfur atom into dethiobiotin via a radical-based mechanism. In Pseudomonas fluorescens (strain ATCC BAA-477 / NRRL B-23932 / Pf-5), this protein is Biotin synthase.